We begin with the raw amino-acid sequence, 202 residues long: NAD(P)H-quinone oxidoreductase subunit I (202 aa).

4Fe-4S ferredoxin-type domains follow at residues 55-84 and 95-124; these read GRIH…VDWV and KNYS…MTEE. [4Fe-4S] cluster contacts are provided by C64, C67, C70, C74, C104, C107, C110, and C114. Basic and acidic residues predominate over residues 168 to 187; it reads EYDPHVVPSDRPRAGQRPEE. The tract at residues 168–202 is disordered; it reads EYDPHVVPSDRPRAGQRPEELVDQYKQAAAANEEN.

The protein belongs to the complex I 23 kDa subunit family. NDH-1 is composed of at least 11 different subunits. [4Fe-4S] cluster is required as a cofactor.

Its subcellular location is the cellular thylakoid membrane. The enzyme catalyses a plastoquinone + NADH + (n+1) H(+)(in) = a plastoquinol + NAD(+) + n H(+)(out). It carries out the reaction a plastoquinone + NADPH + (n+1) H(+)(in) = a plastoquinol + NADP(+) + n H(+)(out). NDH-1 shuttles electrons from an unknown electron donor, via FMN and iron-sulfur (Fe-S) centers, to quinones in the respiratory and/or the photosynthetic chain. The immediate electron acceptor for the enzyme in this species is believed to be plastoquinone. Couples the redox reaction to proton translocation, and thus conserves the redox energy in a proton gradient. The chain is NAD(P)H-quinone oxidoreductase subunit I from Synechococcus elongatus (strain ATCC 33912 / PCC 7942 / FACHB-805) (Anacystis nidulans R2).